Here is a 349-residue protein sequence, read N- to C-terminus: MKSVLYLYILFLSCIIINGRDAAPYTPPNGKCKDTEYKRHNLCCLSCPPGTYASRLCDSKTNTQCTPCGSGTFTSRNNHLPACLSCNGRCNSNQVETRSCNTTHNRICECSPGYYCLLKGSSGCKACVSQTKCGIGYGVSGHTSVGDVICSPCGFGTYSHTVSSADKCEPVPNNTFNYIDVEITLYPVNDTSCTRTTTTGLSESILTSELTITMNHTDCNPVFREEYFSVLNKVATSGFFTGENRYQNISKVCTLNFEIKCNNKGSSFKQLTKAKNDDGMMSHSETVTLAGDCLSSVDIYILYSNTNAQDYETDTISYRVGNVLDDDSHMPGSCNIHKPITNSKPTRFL.

Residues 1–22 form the signal peptide; the sequence is MKSVLYLYILFLSCIIINGRDA. The tract at residues 1 to 160 is TNF-binding; sequence MKSVLYLYIL…SPCGFGTYSH (160 aa). 2 TNFR-Cys repeats span residues 31-66 and 67-108; these read KCKDTEYKRHNLCCLSCPPGTYASRLCDSKTNTQCT and PCGS…NRIC. Disulfide bonds link cysteine 32-cysteine 43, cysteine 44-cysteine 57, cysteine 47-cysteine 65, cysteine 68-cysteine 83, cysteine 86-cysteine 100, and cysteine 90-cysteine 108. Residues asparagine 101, asparagine 173, asparagine 189, asparagine 215, and asparagine 248 are each glycosylated (N-linked (GlcNAc...) asparagine; by host). A chemokine-binding region spans residues 161–349; the sequence is TVSSADKCEP…ITNSKPTRFL (189 aa).

Belongs to the orthopoxvirus OPG002 family. As to quaternary structure, homodimer. Interacts with host TNF, LTA, CCL28, CCL25, CXCL12, CXCL13 and CXCl14.

It localises to the secreted. Inhibits host immune defense by binding to host TNF and various chemokines in the extracellular space. Binds host CC chemokines (beta chemokines) and CXC chemokines (alpha chemokines). The chain is Cytokine response-modifying protein B (OPG002) from Variola virus (isolate Human/India/Ind3/1967) (VARV).